A 1400-amino-acid chain; its full sequence is S phase cyclin A-associated protein in the endoplasmic reticulum (1400 aa).

4 disordered regions span residues Glu-36 to Lys-61, Val-226 to Arg-277, Pro-517 to Lys-550, and Arg-701 to Asp-723. Positions Thr-231–Gln-243 are enriched in polar residues. Basic and acidic residues predominate over residues Thr-539–Lys-550. Residues Lys-792–His-816 form a C2H2-type zinc finger. Ser-832 carries the post-translational modification Phosphoserine.

As to quaternary structure, interacts with CCNA2/CDK2 complex, but not with CCNA2/CDC2, CCNB1/CDC2 or CCNE1/CDK2 complexes, at multiple phases of the cell cycle, including S and G2/M. Post-translationally, phosphorylated in vitro by the CCNA2/CDK2 complex. As to expression, widely expressed with high expression in testis. Isoform 1 is detected in various tissues, including retina, fetal and adult brain. Isoform 2 is expressed in the retina at high levels, and in the brain at very low levels.

The protein localises to the endoplasmic reticulum. Its subcellular location is the nucleus. In terms of biological role, CCNA2/CDK2 regulatory protein that transiently maintains CCNA2 in the cytoplasm. This chain is S phase cyclin A-associated protein in the endoplasmic reticulum, found in Homo sapiens (Human).